Reading from the N-terminus, the 580-residue chain is Protein O-linked-mannose beta-1,4-N-acetylglucosaminyltransferase 2 (580 aa).

Over 1 to 4 the chain is Cytoplasmic; sequence MHLS. Residues 5-25 traverse the membrane as a helical; Signal-anchor for type II membrane protein segment; it reads AVLNALLVSVLAAVLWKHVRL. Topologically, residues 26–580 are lumenal; sequence REHAASLEEE…PFADVLVCST (555 aa). 2 N-linked (GlcNAc...) asparagine glycosylation sites follow: N99 and N276. Residues 488 to 580 enclose the Fibronectin type-III domain; it reads ARCQASVQGA…PFADVLVCST (93 aa).

It belongs to the glycosyltransferase 61 family.

Its subcellular location is the endoplasmic reticulum membrane. It catalyses the reaction 3-O-(alpha-D-mannosyl)-L-threonyl-[protein] + UDP-N-acetyl-alpha-D-glucosamine = 3-O-(N-acetyl-beta-D-glucosaminyl-(1-&gt;4)-alpha-D-mannosyl)-L-threonyl-[protein] + UDP + H(+). Its pathway is protein modification; protein glycosylation. Its function is as follows. O-linked mannose beta-1,4-N-acetylglucosaminyltransferase that transfers UDP-N-acetyl-D-glucosamine to the 4-position of the mannose to generate N-acetyl-D-glucosamine-beta-1,4-O-D-mannosylprotein. Involved in the biosynthesis of the phosphorylated O-mannosyl trisaccharide (N-acetylgalactosamine-beta-3-N-acetylglucosamine-beta-4-(phosphate-6-)mannose), a carbohydrate structure present in alpha-dystroglycan (DAG1), which is required for binding laminin G-like domain-containing extracellular proteins with high affinity. The sequence is that of Protein O-linked-mannose beta-1,4-N-acetylglucosaminyltransferase 2 (POMGNT2) from Bos taurus (Bovine).